Reading from the N-terminus, the 438-residue chain is Adenylosuccinate synthetase (438 aa).

Residues 13-19 (GDEGKGK) and 41-43 (GHT) contribute to the GTP site. Asp-14 functions as the Proton acceptor in the catalytic mechanism. The Mg(2+) site is built by Asp-14 and Gly-41. Residues 14-17 (DEGK), 39-42 (NAGH), Thr-136, Arg-150, Gln-231, Thr-246, and Arg-310 each bind IMP. The Proton donor role is filled by His-42. Position 306-312 (306-312 (STTGRRR)) interacts with substrate. GTP is bound by residues Arg-312, 338-340 (KID), and 421-423 (STG).

Belongs to the adenylosuccinate synthetase family. As to quaternary structure, homodimer. Requires Mg(2+) as cofactor.

It is found in the cytoplasm. It carries out the reaction IMP + L-aspartate + GTP = N(6)-(1,2-dicarboxyethyl)-AMP + GDP + phosphate + 2 H(+). Its pathway is purine metabolism; AMP biosynthesis via de novo pathway; AMP from IMP: step 1/2. In terms of biological role, plays an important role in the de novo pathway of purine nucleotide biosynthesis. Catalyzes the first committed step in the biosynthesis of AMP from IMP. This chain is Adenylosuccinate synthetase, found in Blochmanniella floridana.